The following is a 303-amino-acid chain: Pyridoxal 5'-phosphate synthase subunit PdxS (303 aa).

Aspartate 33 is a D-ribose 5-phosphate binding site. Lysine 90 serves as the catalytic Schiff-base intermediate with D-ribose 5-phosphate. Glycine 162 is a binding site for D-ribose 5-phosphate. Arginine 174 is a binding site for D-glyceraldehyde 3-phosphate. D-ribose 5-phosphate-binding positions include glycine 223 and 244 to 245 (GS).

Belongs to the PdxS/SNZ family. As to quaternary structure, in the presence of PdxT, forms a dodecamer of heterodimers.

The catalysed reaction is aldehydo-D-ribose 5-phosphate + D-glyceraldehyde 3-phosphate + L-glutamine = pyridoxal 5'-phosphate + L-glutamate + phosphate + 3 H2O + H(+). The protein operates within cofactor biosynthesis; pyridoxal 5'-phosphate biosynthesis. Catalyzes the formation of pyridoxal 5'-phosphate from ribose 5-phosphate (RBP), glyceraldehyde 3-phosphate (G3P) and ammonia. The ammonia is provided by the PdxT subunit. Can also use ribulose 5-phosphate and dihydroxyacetone phosphate as substrates, resulting from enzyme-catalyzed isomerization of RBP and G3P, respectively. In Streptomyces coelicolor (strain ATCC BAA-471 / A3(2) / M145), this protein is Pyridoxal 5'-phosphate synthase subunit PdxS.